Consider the following 101-residue polypeptide: MNNTEFSKIADITIAYITDTIEEQDKEASIDVDLQGDILNLDTDKGIYVINKQSAAKEIWLSSPVSGPCHFFYEQGKWKNRVGLELMAILTEELDIDFNNV.

It belongs to the frataxin family.

In terms of biological role, involved in iron-sulfur (Fe-S) cluster assembly. May act as a regulator of Fe-S biogenesis. This is Iron-sulfur cluster assembly protein CyaY from Rickettsia akari (strain Hartford).